Here is a 361-residue protein sequence, read N- to C-terminus: Histidine biosynthesis bifunctional protein HisB (361 aa).

Positions 1–172 (MSQPTLFIDR…PKTTACERPP (172 aa)) are histidinol-phosphatase. The Nucleophile role is filled by Asp9. Mg(2+) contacts are provided by Asp9 and Asp11. The active-site Proton donor is the Asp11. Zn(2+)-binding residues include Cys92, His94, Cys100, and Cys102. Asp129 provides a ligand contact to Mg(2+). The interval 173–361 (RYAEVVRTTK…NELPSSKGVL (189 aa)) is imidazoleglycerol-phosphate dehydratase.

It in the N-terminal section; belongs to the histidinol-phosphatase family. This sequence in the C-terminal section; belongs to the imidazoleglycerol-phosphate dehydratase family. Mg(2+) serves as cofactor. Requires Zn(2+) as cofactor.

The protein localises to the cytoplasm. It carries out the reaction D-erythro-1-(imidazol-4-yl)glycerol 3-phosphate = 3-(imidazol-4-yl)-2-oxopropyl phosphate + H2O. It catalyses the reaction L-histidinol phosphate + H2O = L-histidinol + phosphate. Its pathway is amino-acid biosynthesis; L-histidine biosynthesis; L-histidine from 5-phospho-alpha-D-ribose 1-diphosphate: step 6/9. It functions in the pathway amino-acid biosynthesis; L-histidine biosynthesis; L-histidine from 5-phospho-alpha-D-ribose 1-diphosphate: step 8/9. This chain is Histidine biosynthesis bifunctional protein HisB, found in Actinobacillus pleuropneumoniae serotype 7 (strain AP76).